A 325-amino-acid chain; its full sequence is MGRRGKKKGRPVSGWVVLDKPVGMGSTEAVSKIKWLFQAEKAGHAGTLDPLASGMLPIALGEATKTVPYVQDGAKIYRFTVAWGQERSTDDLEGPVTKSSDLRPAEAEVKALLPKYTGVIMQTPPQFSAIKIAGERAYDLAREGETVDIPAREIEIGRLDIIEHHADHTVFEVECGKGTYVRSLARDMGRDLGCFGHISDLRRVEVEPFTSEDFVTIAELEAARFGAQGEDKPEPADDADAIDVPVDFGAIDALLVDTSAALDCLPQIAISDDAATKIRLGNPVIIRGRDAPVEAEEACATARGKLVAIGAIEQGMFKPKRVFAG.

Aspartate 49 acts as the Nucleophile in catalysis.

It belongs to the pseudouridine synthase TruB family. Type 1 subfamily.

It carries out the reaction uridine(55) in tRNA = pseudouridine(55) in tRNA. In terms of biological role, responsible for synthesis of pseudouridine from uracil-55 in the psi GC loop of transfer RNAs. In Mesorhizobium japonicum (strain LMG 29417 / CECT 9101 / MAFF 303099) (Mesorhizobium loti (strain MAFF 303099)), this protein is tRNA pseudouridine synthase B.